We begin with the raw amino-acid sequence, 217 residues long: Phosphatidylserine decarboxylase proenzyme (217 aa).

Ser-183 functions as the Schiff-base intermediate with substrate; via pyruvic acid in the catalytic mechanism. Ser-183 bears the Pyruvic acid (Ser); by autocatalysis mark.

Belongs to the phosphatidylserine decarboxylase family. PSD-A subfamily. As to quaternary structure, heterodimer of a large membrane-associated beta subunit and a small pyruvoyl-containing alpha subunit. Pyruvate serves as cofactor. In terms of processing, is synthesized initially as an inactive proenzyme. Formation of the active enzyme involves a self-maturation process in which the active site pyruvoyl group is generated from an internal serine residue via an autocatalytic post-translational modification. Two non-identical subunits are generated from the proenzyme in this reaction, and the pyruvate is formed at the N-terminus of the alpha chain, which is derived from the carboxyl end of the proenzyme. The post-translation cleavage follows an unusual pathway, termed non-hydrolytic serinolysis, in which the side chain hydroxyl group of the serine supplies its oxygen atom to form the C-terminus of the beta chain, while the remainder of the serine residue undergoes an oxidative deamination to produce ammonia and the pyruvoyl prosthetic group on the alpha chain.

The protein resides in the cell membrane. The catalysed reaction is a 1,2-diacyl-sn-glycero-3-phospho-L-serine + H(+) = a 1,2-diacyl-sn-glycero-3-phosphoethanolamine + CO2. It functions in the pathway phospholipid metabolism; phosphatidylethanolamine biosynthesis; phosphatidylethanolamine from CDP-diacylglycerol: step 2/2. Functionally, catalyzes the formation of phosphatidylethanolamine (PtdEtn) from phosphatidylserine (PtdSer). The sequence is that of Phosphatidylserine decarboxylase proenzyme from Cupriavidus pinatubonensis (strain JMP 134 / LMG 1197) (Cupriavidus necator (strain JMP 134)).